The primary structure comprises 252 residues: Isoprenyl transferase (252 aa).

Residue aspartate 32 is part of the active site. Aspartate 32 is a binding site for Mg(2+). Substrate-binding positions include glycine 33–arginine 36, tryptophan 37, arginine 45, histidine 49, and serine 77–glutamate 79. Asparagine 80 (proton acceptor) is an active-site residue. Substrate contacts are provided by residues tryptophan 81, arginine 83, arginine 200, and arginine 206–serine 208. Glutamate 219 contacts Mg(2+).

It belongs to the UPP synthase family. Homodimer. It depends on Mg(2+) as a cofactor.

Its function is as follows. Catalyzes the condensation of isopentenyl diphosphate (IPP) with allylic pyrophosphates generating different type of terpenoids. The chain is Isoprenyl transferase from Listeria monocytogenes serovar 1/2a (strain ATCC BAA-679 / EGD-e).